We begin with the raw amino-acid sequence, 425 residues long: uncharacterized protein (425 aa).

The HD domain occupies arginine 55–leucine 181.

This is an uncharacterized protein from Mycoplasma pneumoniae (strain ATCC 29342 / M129 / Subtype 1) (Mycoplasmoides pneumoniae).